Here is a 165-residue protein sequence, read N- to C-terminus: UPF0303 protein Rleg2_2653 (165 aa).

Belongs to the UPF0303 family.

The chain is UPF0303 protein Rleg2_2653 from Rhizobium leguminosarum bv. trifolii (strain WSM2304).